The sequence spans 30 residues: Urease subunit alpha (30 aa).

It belongs to the metallo-dependent hydrolases superfamily. Urease alpha subunit family. Heterotrimer of UreA (gamma), UreB (beta) and UreC (alpha) subunits. Three heterotrimers associate to form the active enzyme. The cofactor is Ni cation.

Its subcellular location is the cytoplasm. The enzyme catalyses urea + 2 H2O + H(+) = hydrogencarbonate + 2 NH4(+). The protein operates within nitrogen metabolism; urea degradation; CO(2) and NH(3) from urea (urease route): step 1/1. In Escherichia coli, this protein is Urease subunit alpha (ureC).